Consider the following 439-residue polypeptide: Deacetylvindoline O-acetyltransferase (439 aa).

The active-site Proton acceptor is H158. The stretch at 317-344 forms a coiled coil; it reads TKLVINELRKEKQKIKNLSREKLTYVAQ. D380 (proton acceptor) is an active-site residue.

Belongs to the plant acyltransferase family. In terms of assembly, monomer. As to expression, predominantly expressed in young leaves of mature plants. Low expression in stems and flowers and not detected in roots. Confined to the laticifer and idioblast cells of leaves, stems, and flower buds.

Its subcellular location is the cytoplasm. The protein localises to the nucleus. The catalysed reaction is 4-O-deacetylvindoline + acetyl-CoA = vindoline + CoA. It functions in the pathway alkaloid biosynthesis; vindoline biosynthesis. Its function is as follows. Involved in the biosynthesis of vindoline, a precursor of vinblastine and vincristine. This is Deacetylvindoline O-acetyltransferase from Catharanthus roseus (Madagascar periwinkle).